Reading from the N-terminus, the 142-residue chain is Large ribosomal subunit protein uL11 (142 aa).

The protein belongs to the universal ribosomal protein uL11 family. In terms of assembly, part of the ribosomal stalk of the 50S ribosomal subunit. Interacts with L10 and the large rRNA to form the base of the stalk. L10 forms an elongated spine to which L12 dimers bind in a sequential fashion forming a multimeric L10(L12)X complex. In terms of processing, one or more lysine residues are methylated.

Functionally, forms part of the ribosomal stalk which helps the ribosome interact with GTP-bound translation factors. In Xanthomonas campestris pv. campestris (strain 8004), this protein is Large ribosomal subunit protein uL11.